Reading from the N-terminus, the 282-residue chain is MSIFLVKAPAKVNLFLHITGKRIDQHHYLESLFVFVNVYDLLEVNIDGRKRGVYFSNFKISKYNNTVYKAIELLLKHSSVRPNISVNVIKNILVSAGLAGGSADAAAIIRLLGNMWNIDCKLLQDLALKVGSDVPACLESKTLFAKGVGEDILLLPDLLLPRYIILVAPRGKSLSTAKVFNHYKCDNFSASICDKLPVKQDDWMELIYNSKNDLLDVALNFVPEIEEILFVLKKLKNVFIARMTGSGATCFALFHELSHAENAAKHLRMTRPDWVIFNAKIL.

The active site involves K11. 93–103 (LVSAGLAGGSA) serves as a coordination point for ATP. The active site involves D133.

Belongs to the GHMP kinase family. IspE subfamily.

It carries out the reaction 4-CDP-2-C-methyl-D-erythritol + ATP = 4-CDP-2-C-methyl-D-erythritol 2-phosphate + ADP + H(+). It participates in isoprenoid biosynthesis; isopentenyl diphosphate biosynthesis via DXP pathway; isopentenyl diphosphate from 1-deoxy-D-xylulose 5-phosphate: step 3/6. Catalyzes the phosphorylation of the position 2 hydroxy group of 4-diphosphocytidyl-2C-methyl-D-erythritol. The sequence is that of 4-diphosphocytidyl-2-C-methyl-D-erythritol kinase from Ehrlichia canis (strain Jake).